The chain runs to 252 residues: Chitooligosaccharide deacetylase (252 aa).

H61 and H125 together coordinate Mg(2+).

This sequence belongs to the YdjC deacetylase family. ChbG subfamily. As to quaternary structure, homodimer. Mg(2+) is required as a cofactor.

The protein localises to the cytoplasm. It carries out the reaction N,N'-diacetylchitobiose + H2O = N-acetyl-beta-D-glucosaminyl-(1-&gt;4)-D-glucosamine + acetate. It catalyses the reaction diacetylchitobiose-6'-phosphate + H2O = N'-monoacetylchitobiose-6'-phosphate + acetate. It functions in the pathway glycan degradation; chitin degradation. In terms of biological role, involved in the degradation of chitin. ChbG is essential for growth on the acetylated chitooligosaccharides chitobiose and chitotriose but is dispensable for growth on cellobiose and chitosan dimer, the deacetylated form of chitobiose. Deacetylation of chitobiose-6-P and chitotriose-6-P is necessary for both the activation of the chb promoter by the regulatory protein ChbR and the hydrolysis of phosphorylated beta-glucosides by the phospho-beta-glucosidase ChbF. Catalyzes the removal of only one acetyl group from chitobiose-6-P to yield monoacetylchitobiose-6-P, the inducer of ChbR and the substrate of ChbF. This Escherichia coli O45:K1 (strain S88 / ExPEC) protein is Chitooligosaccharide deacetylase.